We begin with the raw amino-acid sequence, 343 residues long: D-alanine--D-alanine ligase (343 aa).

The 207-residue stretch at 129–335 (KYVLENFGVK…YGELISEIIE (207 aa)) folds into the ATP-grasp domain. Position 162 to 217 (162 to 217 (ENKLGYDVFIKPSNSGSSVGISKAHNREELEAGLEEALKFDRKVLVEVALNAREIE)) interacts with ATP. Positions 288, 302, and 304 each coordinate Mg(2+).

The protein belongs to the D-alanine--D-alanine ligase family. Requires Mg(2+) as cofactor. Mn(2+) is required as a cofactor.

It localises to the cytoplasm. It carries out the reaction 2 D-alanine + ATP = D-alanyl-D-alanine + ADP + phosphate + H(+). It participates in cell wall biogenesis; peptidoglycan biosynthesis. Functionally, cell wall formation. The sequence is that of D-alanine--D-alanine ligase from Clostridium novyi (strain NT).